The sequence spans 165 residues: Small ribosomal subunit protein eS10 (165 aa).

The segment at 92–165 is disordered; that stretch reads ATLRRSRPET…FGRGRGQAPQ (74 aa). The span at 97-128 shows a compositional bias: basic and acidic residues; it reads SRPETGRPRPKGLEGERPPRLPRGETDRDTYR. A compositionally biased stretch (low complexity) spans 142–153; sequence AGAGAATEFQFR. Residues 154-165 are compositionally biased toward gly residues; it reads GGFGRGRGQAPQ.

The protein belongs to the eukaryotic ribosomal protein eS10 family. As to quaternary structure, component of the small ribosomal subunit.

The protein localises to the cytoplasm. The protein resides in the nucleus. It is found in the nucleolus. In terms of biological role, component of the 40S ribosomal subunit. The ribosome is a large ribonucleoprotein complex responsible for the synthesis of proteins in the cell. The polypeptide is Small ribosomal subunit protein eS10 (rps10) (Xenopus laevis (African clawed frog)).